A 314-amino-acid polypeptide reads, in one-letter code: Cathepsin L 2 (314 aa).

Positions 1–24 are cleaved as a signal peptide; it reads MMLLGASLYLNNTQEVSDEIDTAN. Positions 25–109 are cleaved as a propeptide — activation peptide; that stretch reads LYANWKMKYN…NASNANFQYK (85 aa). Cystine bridges form between cysteine 132/cysteine 175, cysteine 166/cysteine 207, and cysteine 259/cysteine 302. Cysteine 135 is an active-site residue. Residues histidine 265 and asparagine 282 contribute to the active site.

The protein belongs to the peptidase C1 family.

It localises to the secreted. It carries out the reaction Specificity close to that of papain. As compared to cathepsin B, cathepsin L exhibits higher activity toward protein substrates, but has little activity on Z-Arg-Arg-NHMec, and no peptidyl-dipeptidase activity.. Its function is as follows. May be involved in extracellular digestion. This is Cathepsin L 2 from Paramecium tetraurelia.